Reading from the N-terminus, the 381-residue chain is Succinyl-diaminopimelate desuccinylase (381 aa).

His69 is a binding site for Zn(2+). The active site involves Asp71. Residue Asp103 coordinates Zn(2+). Glu137 acts as the Proton acceptor in catalysis. Residues Glu138, Glu166, and His355 each contribute to the Zn(2+) site.

The protein belongs to the peptidase M20A family. DapE subfamily. Homodimer. Requires Zn(2+) as cofactor. The cofactor is Co(2+).

The catalysed reaction is N-succinyl-(2S,6S)-2,6-diaminopimelate + H2O = (2S,6S)-2,6-diaminopimelate + succinate. The protein operates within amino-acid biosynthesis; L-lysine biosynthesis via DAP pathway; LL-2,6-diaminopimelate from (S)-tetrahydrodipicolinate (succinylase route): step 3/3. In terms of biological role, catalyzes the hydrolysis of N-succinyl-L,L-diaminopimelic acid (SDAP), forming succinate and LL-2,6-diaminopimelate (DAP), an intermediate involved in the bacterial biosynthesis of lysine and meso-diaminopimelic acid, an essential component of bacterial cell walls. This Rickettsia rickettsii (strain Iowa) protein is Succinyl-diaminopimelate desuccinylase.